Reading from the N-terminus, the 356-residue chain is DNA polymerase IV (356 aa).

Residues 7–188 (IIHIDMDCFY…LPLKKISGVG (182 aa)) form the UmuC domain. The Mg(2+) site is built by D11 and D106. E107 is an active-site residue.

This sequence belongs to the DNA polymerase type-Y family. Monomer. Requires Mg(2+) as cofactor.

It is found in the cytoplasm. The enzyme catalyses DNA(n) + a 2'-deoxyribonucleoside 5'-triphosphate = DNA(n+1) + diphosphate. In terms of biological role, poorly processive, error-prone DNA polymerase involved in untargeted mutagenesis. Copies undamaged DNA at stalled replication forks, which arise in vivo from mismatched or misaligned primer ends. These misaligned primers can be extended by PolIV. Exhibits no 3'-5' exonuclease (proofreading) activity. May be involved in translesional synthesis, in conjunction with the beta clamp from PolIII. This is DNA polymerase IV from Glaesserella parasuis serovar 5 (strain SH0165) (Haemophilus parasuis).